The chain runs to 272 residues: Protein alcS (272 aa).

Residues 1–14 show a composition bias toward polar residues; sequence MDTEQGLKNHTAKT. The disordered stretch occupies residues 1 to 21; that stretch reads MDTEQGLKNHTAKTSPHDETA. A run of 6 helical transmembrane segments spans residues 63-83, 91-111, 122-144, 164-184, 192-212, and 225-245; these read PLAL…LMGW, IAFT…TSIL, VVFG…AFNA, FLNT…IFLA, VYVA…GAYW, and LVVA…YLLV.

This sequence belongs to the acetate uptake transporter (AceTr) (TC 2.A.96) family.

The protein localises to the cell membrane. It is found in the cell septum. The sequence is that of Protein alcS from Aspergillus fumigatus (strain CBS 144.89 / FGSC A1163 / CEA10) (Neosartorya fumigata).